A 155-amino-acid chain; its full sequence is 3-hydroxyacyl-[acyl-carrier-protein] dehydratase FabZ (155 aa).

Residue His-61 is part of the active site.

This sequence belongs to the thioester dehydratase family. FabZ subfamily.

The protein resides in the cytoplasm. It catalyses the reaction a (3R)-hydroxyacyl-[ACP] = a (2E)-enoyl-[ACP] + H2O. Functionally, involved in unsaturated fatty acids biosynthesis. Catalyzes the dehydration of short chain beta-hydroxyacyl-ACPs and long chain saturated and unsaturated beta-hydroxyacyl-ACPs. The sequence is that of 3-hydroxyacyl-[acyl-carrier-protein] dehydratase FabZ from Synechococcus elongatus (strain ATCC 33912 / PCC 7942 / FACHB-805) (Anacystis nidulans R2).